A 1211-amino-acid chain; its full sequence is Diacylglycerol kinase 1 (1211 aa).

The interval 174 to 244 (HHSLGGHLSH…RNSSKKSSNS (71 aa)) is disordered. A compositionally biased stretch (polar residues) spans 197–230 (VTPSPLASGPSMFQASNPARRSVDSSPSHSATNH). A compositionally biased stretch (low complexity) spans 231–244 (SQMSRNSSKKSSNS). EF-hand domains are found at residues 286 to 321 (RPED…MMAV) and 331 to 366 (ELRP…TIPL). Residues aspartate 299, aspartate 301, asparagine 303, glutamate 310, aspartate 344, aspartate 346, aspartate 348, threonine 350, and glutamate 355 each contribute to the Ca(2+) site. 2 consecutive Phorbol-ester/DAG-type zinc fingers follow at residues 382-432 (IHVW…PASC) and 449-498 (LHHW…KKEC). In terms of domain architecture, DAGKc spans 548-682 (ELSCPLLVFV…LDRWSIEVTN (135 aa)). 3 disordered regions span residues 789-841 (TLRT…ETEK), 874-893 (AATA…QRNK), and 910-958 (DHED…QQQQ). Residues 795 to 805 (SSSSSNTSSGS) show a composition bias toward low complexity. Over residues 826 to 841 (DVREKSVPRRSGETEK) the composition is skewed to basic and acidic residues. Residues 879 to 893 (PVGSNQSDNSSQRNK) are compositionally biased toward polar residues. The span at 931 to 958 (NSIPATPATPITPTTPNAASSVLQQQQQ) shows a compositional bias: low complexity.

This sequence belongs to the eukaryotic diacylglycerol kinase family. In terms of tissue distribution, in 10-11 hours embryos, expression is abundant in a limited number of cells in the procephalic region and in the ventral nerve cord. Predominantly expressed in the adult nervous system and muscle: including compound eyes, brain cortex, fibrillar muscle, and tubular muscle.

The catalysed reaction is a 1,2-diacyl-sn-glycerol + ATP = a 1,2-diacyl-sn-glycero-3-phosphate + ADP + H(+). Upon cell stimulation converts the second messenger diacylglycerol into phosphatidate, initiating the resynthesis of phosphatidylinositols and attenuating protein kinase C activity. May have a role in the development of the embryonic nervous system and the function of the adult nervous system and muscle; regulating signal transduction in neurons. This is Diacylglycerol kinase 1 (Dgk) from Drosophila melanogaster (Fruit fly).